The chain runs to 115 residues: Phosphoribosyl-ATP pyrophosphatase (115 aa).

It belongs to the PRA-PH family.

It is found in the cytoplasm. The catalysed reaction is 1-(5-phospho-beta-D-ribosyl)-ATP + H2O = 1-(5-phospho-beta-D-ribosyl)-5'-AMP + diphosphate + H(+). It functions in the pathway amino-acid biosynthesis; L-histidine biosynthesis; L-histidine from 5-phospho-alpha-D-ribose 1-diphosphate: step 2/9. This chain is Phosphoribosyl-ATP pyrophosphatase, found in Bordetella parapertussis (strain 12822 / ATCC BAA-587 / NCTC 13253).